A 246-amino-acid chain; its full sequence is tRNA pseudouridine synthase A (246 aa).

Asp52 acts as the Nucleophile in catalysis. Residue Tyr111 coordinates substrate.

It belongs to the tRNA pseudouridine synthase TruA family. In terms of assembly, homodimer.

The catalysed reaction is uridine(38/39/40) in tRNA = pseudouridine(38/39/40) in tRNA. Formation of pseudouridine at positions 38, 39 and 40 in the anticodon stem and loop of transfer RNAs. This chain is tRNA pseudouridine synthase A, found in Fervidobacterium nodosum (strain ATCC 35602 / DSM 5306 / Rt17-B1).